Reading from the N-terminus, the 97-residue chain is Aspartyl/glutamyl-tRNA(Asn/Gln) amidotransferase subunit C (97 aa).

This sequence belongs to the GatC family. As to quaternary structure, heterotrimer of A, B and C subunits.

It catalyses the reaction L-glutamyl-tRNA(Gln) + L-glutamine + ATP + H2O = L-glutaminyl-tRNA(Gln) + L-glutamate + ADP + phosphate + H(+). The catalysed reaction is L-aspartyl-tRNA(Asn) + L-glutamine + ATP + H2O = L-asparaginyl-tRNA(Asn) + L-glutamate + ADP + phosphate + 2 H(+). Its function is as follows. Allows the formation of correctly charged Asn-tRNA(Asn) or Gln-tRNA(Gln) through the transamidation of misacylated Asp-tRNA(Asn) or Glu-tRNA(Gln) in organisms which lack either or both of asparaginyl-tRNA or glutaminyl-tRNA synthetases. The reaction takes place in the presence of glutamine and ATP through an activated phospho-Asp-tRNA(Asn) or phospho-Glu-tRNA(Gln). This chain is Aspartyl/glutamyl-tRNA(Asn/Gln) amidotransferase subunit C, found in Prochlorococcus marinus subsp. pastoris (strain CCMP1986 / NIES-2087 / MED4).